Reading from the N-terminus, the 91-residue chain is Small ribosomal subunit protein uS19 (91 aa).

Belongs to the universal ribosomal protein uS19 family.

Functionally, protein S19 forms a complex with S13 that binds strongly to the 16S ribosomal RNA. This is Small ribosomal subunit protein uS19 from Bordetella petrii (strain ATCC BAA-461 / DSM 12804 / CCUG 43448).